The chain runs to 956 residues: Isoleucine--tRNA ligase (956 aa).

Positions 60-70 (PYANGHIHVGH) match the 'HIGH' region motif. An L-isoleucyl-5'-AMP-binding site is contributed by E583. The 'KMSKS' region motif lies at 624-628 (KMSKS). K627 contacts ATP. Zn(2+) is bound by residues C921, C924, C938, and C941.

It belongs to the class-I aminoacyl-tRNA synthetase family. IleS type 1 subfamily. As to quaternary structure, monomer. The cofactor is Zn(2+).

Its subcellular location is the cytoplasm. The catalysed reaction is tRNA(Ile) + L-isoleucine + ATP = L-isoleucyl-tRNA(Ile) + AMP + diphosphate. In terms of biological role, catalyzes the attachment of isoleucine to tRNA(Ile). As IleRS can inadvertently accommodate and process structurally similar amino acids such as valine, to avoid such errors it has two additional distinct tRNA(Ile)-dependent editing activities. One activity is designated as 'pretransfer' editing and involves the hydrolysis of activated Val-AMP. The other activity is designated 'posttransfer' editing and involves deacylation of mischarged Val-tRNA(Ile). The protein is Isoleucine--tRNA ligase of Aquifex aeolicus (strain VF5).